The chain runs to 501 residues: Glutamyl-tRNA(Gln) amidotransferase subunit A (501 aa).

Active-site charge relay system residues include Lys80 and Ser155. Residue Ser179 is the Acyl-ester intermediate of the active site.

Belongs to the amidase family. GatA subfamily. Heterotrimer of A, B and C subunits.

It catalyses the reaction L-glutamyl-tRNA(Gln) + L-glutamine + ATP + H2O = L-glutaminyl-tRNA(Gln) + L-glutamate + ADP + phosphate + H(+). Functionally, allows the formation of correctly charged Gln-tRNA(Gln) through the transamidation of misacylated Glu-tRNA(Gln) in organisms which lack glutaminyl-tRNA synthetase. The reaction takes place in the presence of glutamine and ATP through an activated gamma-phospho-Glu-tRNA(Gln). The sequence is that of Glutamyl-tRNA(Gln) amidotransferase subunit A from Cupriavidus taiwanensis (strain DSM 17343 / BCRC 17206 / CCUG 44338 / CIP 107171 / LMG 19424 / R1) (Ralstonia taiwanensis (strain LMG 19424)).